Reading from the N-terminus, the 85-residue chain is U4-theraphotoxin-Hhn1o (85 aa).

The first 22 residues, 1 to 22 (MKVTLIAILTCAAVLVLHTTAA), serve as a signal peptide directing secretion. Residues 23 to 48 (EELEAESQLMEVGMPDTELAAVDEER) constitute a propeptide that is removed on maturation. 3 disulfide bridges follow: Cys-52/Cys-66, Cys-56/Cys-77, and Cys-71/Cys-82.

The protein belongs to the neurotoxin 12 (Hwtx-2) family. 02 (Hwtx-2) subfamily. Expressed by the venom gland.

It localises to the secreted. Functionally, postsynaptic neurotoxin. This chain is U4-theraphotoxin-Hhn1o, found in Cyriopagopus hainanus (Chinese bird spider).